We begin with the raw amino-acid sequence, 419 residues long: Probable pectate lyase C (419 aa).

The first 19 residues, 1–19 (MRLGIALFSLIGLCHSVSA), serve as a signal peptide directing secretion. N-linked (GlcNAc...) asparagine glycans are attached at residues Asn48, Asn164, and Asn201. Arg204 is a catalytic residue. Residues 261–296 (NEYFHGYVETNYYDPDRDGTLNGNELGVSASNYGGM) enclose the EF-hand domain. Residues Asp274, Asp276, Asp278, Thr280, and Glu285 each coordinate Ca(2+). A disordered region spans residues 350-395 (ELISDEASMGGPGDLDGGSPPTDSDGDGIPDDAETEIGSDPNTADS). Acidic residues predominate over residues 373–386 (SDGDGIPDDAETEI).

Belongs to the polysaccharide lyase 1 family. The cofactor is Ca(2+).

It localises to the secreted. It catalyses the reaction Eliminative cleavage of (1-&gt;4)-alpha-D-galacturonan to give oligosaccharides with 4-deoxy-alpha-D-galact-4-enuronosyl groups at their non-reducing ends.. Its function is as follows. Pectinolytic enzyme consist of four classes of enzymes: pectin lyase, polygalacturonase, pectin methylesterase and rhamnogalacturonase. Among pectinolytic enzymes, pectin lyase is the most important in depolymerization of pectin, since it cleaves internal glycosidic bonds of highly methylated pectins. Favors pectate, the anion, over pectin, the methyl ester. This is Probable pectate lyase C (plyC) from Aspergillus terreus (strain NIH 2624 / FGSC A1156).